The primary structure comprises 210 residues: MAYSVKELFKTLQGEGAQAGRAAVFCRFAGCNLWTGRESDRAGAACTFCDTDFVGTDGQGGGKFADAAGLADAIAACWGEHPADRYVVFTGGEPLLQLDEALLQAVHAQGFTVAIETNGTLPPPPGIDWICVSPKGRAPVVVERGHELKLVFPQADARPEAFAHLAFEHFFLQPMDGPARAAHTTQAVQYCLDHPQWRLSLQTHKYIGIP.

Residues 12-14 and Arg27 each bind substrate; that span reads LQG. Residues 18-210 form the Radical SAM core domain; the sequence is QAGRAAVFCR…LQTHKYIGIP (193 aa). [4Fe-4S] cluster-binding residues include Cys31, Cys46, and Cys49. A Mg(2+)-binding site is contributed by Thr51. Thr90 serves as a coordination point for substrate. Residues Gly92, 133 to 135, and 173 to 176 each bind S-adenosyl-L-methionine; these read SPK and QPMD. Pro210 lines the substrate pocket.

The protein belongs to the radical SAM superfamily. 7-carboxy-7-deazaguanine synthase family. In terms of assembly, homodimer. [4Fe-4S] cluster is required as a cofactor. It depends on S-adenosyl-L-methionine as a cofactor. The cofactor is Mg(2+).

The enzyme catalyses 6-carboxy-5,6,7,8-tetrahydropterin + H(+) = 7-carboxy-7-deazaguanine + NH4(+). The protein operates within purine metabolism; 7-cyano-7-deazaguanine biosynthesis. Functionally, catalyzes the complex heterocyclic radical-mediated conversion of 6-carboxy-5,6,7,8-tetrahydropterin (CPH4) to 7-carboxy-7-deazaguanine (CDG), a step common to the biosynthetic pathways of all 7-deazapurine-containing compounds. This chain is 7-carboxy-7-deazaguanine synthase, found in Bordetella pertussis (strain Tohama I / ATCC BAA-589 / NCTC 13251).